Reading from the N-terminus, the 454-residue chain is MSNLPSEPEFEQAYKELAYTLENSSLFQKHPEYRTALTVASIPERVIQFRVVWEDDNGNVQVNRGYRVQFNSALGPYKGGLRLHPSVNLSILKFLGFEQIFKNALTGLSMGGGKGGADFDPKGKSDAEIRRFCCAFMAELHKHIGADTDVPAGDIGVGGREIGYMFGAYRKAANRFEGVLTGKGLSWGGSLIRPEATGYGLVYYVGHMLEYSGAGSYAGKRVALSGSGNVAQYAALKLIELGATVVSLSDSKGALVATGESGITVEDINAVMAIKEARQSLTSFQHAGHLKWIEGARPWLHVGKVDIALPCATQNEVSKEEAEGLLAAGCKFVAEGSNMGCTLEAIEVFENHRKEKKGEAVWYAPGKAANCGGVAVSGLEMAQNSQRLNWTQAEVDEKLKDIMKNAFFNGLNTAKIYVEAAEGELPSLVAGSNIAGFVKVAQAMHDQGDWWSKN.

Serine 2 carries the N-acetylserine modification. Lysine 114 is a catalytic residue.

It belongs to the Glu/Leu/Phe/Val dehydrogenases family. In terms of assembly, homohexamer.

It carries out the reaction L-glutamate + NADP(+) + H2O = 2-oxoglutarate + NH4(+) + NADPH + H(+). This chain is NADP-specific glutamate dehydrogenase (GDH), found in Neurospora intermedia.